Consider the following 154-residue polypeptide: Large ribosomal subunit protein uL13 (154 aa).

This sequence belongs to the universal ribosomal protein uL13 family. In terms of assembly, part of the 50S ribosomal subunit.

This protein is one of the early assembly proteins of the 50S ribosomal subunit, although it is not seen to bind rRNA by itself. It is important during the early stages of 50S assembly. The polypeptide is Large ribosomal subunit protein uL13 (Mesorhizobium japonicum (strain LMG 29417 / CECT 9101 / MAFF 303099) (Mesorhizobium loti (strain MAFF 303099))).